A 164-amino-acid chain; its full sequence is S-ribosylhomocysteine lyase (164 aa).

The Fe cation site is built by H54, H58, and C128.

It belongs to the LuxS family. In terms of assembly, homodimer. It depends on Fe cation as a cofactor.

It carries out the reaction S-(5-deoxy-D-ribos-5-yl)-L-homocysteine = (S)-4,5-dihydroxypentane-2,3-dione + L-homocysteine. Functionally, involved in the synthesis of autoinducer 2 (AI-2) which is secreted by bacteria and is used to communicate both the cell density and the metabolic potential of the environment. The regulation of gene expression in response to changes in cell density is called quorum sensing. Catalyzes the transformation of S-ribosylhomocysteine (RHC) to homocysteine (HC) and 4,5-dihydroxy-2,3-pentadione (DPD). This chain is S-ribosylhomocysteine lyase, found in Campylobacter jejuni subsp. jejuni serotype O:6 (strain 81116 / NCTC 11828).